A 263-amino-acid polypeptide reads, in one-letter code: MTQGAQRLVSMRALLESGAHFGHQTKRWNPKMRPYIFTARNGIHIIDLQKTITGLTEAYQFIVETVAAGNKVLFVGTKKQAQETIAEEATRADQLYVIQRWLGGTLTNFVTIRKRLRYLINLEEQRARGEFNKLTKAEALKRDAEIEKLNKIFGGIKTMDRLPGALFIVDPHKEDLAVKEANKVGIPIVAMVDTNCDPDLIDYVIPCNDDAIRSIRLIAAKIADAAIEGRNRRESLQADVAYSQSHDHAMAERMIAEEAEAVE.

Belongs to the universal ribosomal protein uS2 family.

This chain is Small ribosomal subunit protein uS2, found in Roseiflexus castenholzii (strain DSM 13941 / HLO8).